A 556-amino-acid chain; its full sequence is Formate--tetrahydrofolate ligase (556 aa).

Residue 65–72 (TPAGEGKT) participates in ATP binding.

Belongs to the formate--tetrahydrofolate ligase family.

It carries out the reaction (6S)-5,6,7,8-tetrahydrofolate + formate + ATP = (6R)-10-formyltetrahydrofolate + ADP + phosphate. It functions in the pathway one-carbon metabolism; tetrahydrofolate interconversion. The chain is Formate--tetrahydrofolate ligase from Maricaulis maris (strain MCS10) (Caulobacter maris).